A 93-amino-acid chain; its full sequence is Cell division topological specificity factor (93 aa).

It belongs to the MinE family.

Prevents the cell division inhibition by proteins MinC and MinD at internal division sites while permitting inhibition at polar sites. This ensures cell division at the proper site by restricting the formation of a division septum at the midpoint of the long axis of the cell. The chain is Cell division topological specificity factor from Halorhodospira halophila (strain DSM 244 / SL1) (Ectothiorhodospira halophila (strain DSM 244 / SL1)).